The chain runs to 1906 residues: Serine protease/ABC transporter B family protein tagB (1906 aa).

Positions 1-31 (MKFQFSSPSKIFLFSSVILILIFIGIKFELL) are cleaved as a signal peptide. Residues 96-134 (INNNNNNNNKLNNNNNNNNNNNNNNNNNNNNNNNNNNNN) form a disordered region. A Peptidase S8 domain is found at 356–763 (PTVIFGTKDK…ASSTNPSNAI (408 aa)). Residues Asp-387 and His-432 each act as charge relay system in the active site. N-linked (GlcNAc...) asparagine glycosylation is found at Asn-594, Asn-621, and Asn-672. Catalysis depends on Ser-695, which acts as the Charge relay system. 2 N-linked (GlcNAc...) asparagine glycosylation sites follow: Asn-747 and Asn-823. The next 3 helical transmembrane spans lie at 1011–1031 (YIII…LMWI), 1076–1096 (FIIE…ASIL), and 1121–1141 (FIII…GSWI). The ABC transmembrane type-1 domain maps to 1080–1363 (LTIATACSLV…LFGVYVSYIQ (284 aa)). A glycan (N-linked (GlcNAc...) asparagine) is linked at Asn-1172. 3 consecutive transmembrane segments (helical) span residues 1210–1230 (LVFI…AVPI), 1309–1329 (WLLI…LVIQ), and 1332–1352 (FTVG…DASS). Residues 1385 to 1455 (LEEEEADRLA…NNNNNIGNLD (71 aa)) form a disordered region. A compositionally biased stretch (gly residues) spans 1396–1405 (LSGGGGGGGD). Positions 1407-1420 (GDDKKDKQNIENGK) are enriched in basic and acidic residues. In terms of domain architecture, ABC transporter spans 1518-1756 (IEFKNVSFRY…KGKYYRMFSE (239 aa)). N-linked (GlcNAc...) asparagine glycosylation is present at Asn-1522. 1553–1560 (GPSGSGKS) serves as a coordination point for ATP. N-linked (GlcNAc...) asparagine glycosylation occurs at Asn-1658. The tract at residues 1757 to 1906 (DKDDTPLQNN…QMDEENDEER (150 aa)) is disordered. Low complexity-rich tracts occupy residues 1765-1779 (NNNN…NNNN) and 1814-1871 (EQQE…DYDQ). The span at 1872–1886 (VPPPPPLPSESPSPP) shows a compositional bias: pro residues.

It in the C-terminal section; belongs to the ABC transporter superfamily. ABCB family. Multidrug resistance exporter (TC 3.A.1.201) subfamily. The protein in the N-terminal section; belongs to the peptidase S8 family.

Its subcellular location is the membrane. Intercellular communication via tagB may mediate integration of cellular differentiation with morphogenesis. This Dictyostelium discoideum (Social amoeba) protein is Serine protease/ABC transporter B family protein tagB (tagB).